The chain runs to 473 residues: Sphingosine kinase 1 (473 aa).

Positions 83-233 (QCRGNLLVFI…VALYSVKTDN (151 aa)) constitute a DAGKc domain. Residues 93-95 (NPN) and 125-129 (TTGPN) each bind ATP. Residue 151-154 (SGDG) coordinates substrate. The active-site Proton donor/acceptor is aspartate 153. Residues glutamate 158 and 184-186 (GSG) each bind ATP. Aspartate 251 contributes to the substrate binding site. ATP contacts are provided by residues arginine 258, arginine 265, and 448–450 (DGE).

Requires Mg(2+) as cofactor. In terms of tissue distribution, expressed in the majority of cholinergic and GABAergic neurons, body wall muscle, excretory canal cells, intestine, and hypodermis.

The protein resides in the presynaptic cell membrane. It is found in the cell projection. It localises to the axon. Its subcellular location is the perikaryon. The protein localises to the mitochondrion membrane. It catalyses the reaction a sphingoid base + ATP = a sphingoid 1-phosphate + ADP + H(+). The enzyme catalyses 15-methylhexadecasphing-4-enine + ATP = 15-methylhexadecasphing-4-enine 1-phosphate + ADP + H(+). It carries out the reaction 15-methylhexadecasphinganine + ATP = 15-methylhexadecasphinganine 1-phosphate + ADP + H(+). Its pathway is lipid metabolism; sphingolipid metabolism. In terms of biological role, catalyzes the phosphorylation of sphingoid bases to form sphingoid 1-phosphate (SPP), which have both intra- and extracellular functions. C.elegans contain specific sphingoid bases, which are unique or different in structure compared to the sphingoid bases found in other animals. Two examples of these distinctive compounds are: 15-methylhexadecasphinganine and 15-methylhexadecasphing-4-enine. Required for neurotransmitter release from neuromuscular junctions. Acts by recruiting the synaptic vesicle priming protein unc-13 to synapses. The protein is Sphingosine kinase 1 (sphk-1) of Caenorhabditis elegans.